We begin with the raw amino-acid sequence, 1253 residues long: Cytoplasmic FMR1-interacting protein 2 (1253 aa).

An N6-acetyllysine modification is found at K1037.

This sequence belongs to the CYFIP family. In terms of assembly, component of the WAVE1 complex composed of ABI2, CYFIP2, BRK1, NCKAP1 and WASF1/WAVE1. Interacts with RAC1 (activated form) which causes the complex to dissociate, releasing activated WASF1. The complex can also be activated by NCK1. Interacts with SHANK3; the interaction mediates the association of SHANK3 with the WAVE1 complex. Interacts with FMR1; the interaction occurs in a RNA-dependent manner. Interacts with FXR1 and FXR2. Interacts with TMEM108 (via N-terminus); the interaction associates TMEM108 with the WAVE1 complex.

It is found in the cytoplasm. It localises to the nucleus. Its subcellular location is the perinuclear region. The protein localises to the synapse. The protein resides in the synaptosome. Functionally, involved in T-cell adhesion and p53-dependent induction of apoptosis. Does not bind RNA. As component of the WAVE1 complex, required for BDNF-NTRK2 endocytic trafficking and signaling from early endosomes. In Pongo abelii (Sumatran orangutan), this protein is Cytoplasmic FMR1-interacting protein 2.